Consider the following 240-residue polypeptide: Large ribosomal subunit protein uL2 (240 aa).

Positions 1-10 (MGHRISTQSR) are enriched in polar residues. Disordered stretches follow at residues 1–20 (MGHR…YRAP) and 204–240 (FGGG…GYRR).

The protein belongs to the universal ribosomal protein uL2 family. In terms of assembly, part of the 50S ribosomal subunit. Forms a bridge to the 30S subunit in the 70S ribosome.

One of the primary rRNA binding proteins. Required for association of the 30S and 50S subunits to form the 70S ribosome, for tRNA binding and peptide bond formation. It has been suggested to have peptidyltransferase activity; this is somewhat controversial. Makes several contacts with the 16S rRNA in the 70S ribosome. The sequence is that of Large ribosomal subunit protein uL2 from Methanocorpusculum labreanum (strain ATCC 43576 / DSM 4855 / Z).